Consider the following 166-residue polypeptide: Putative methyltransferase Rv1506c (166 aa).

Belongs to the methyltransferase superfamily.

Functionally, probably plays a role in host phagosome maturation arrest, as well as a role in the synthesis of acyltrehalose-containing glycolipids. The chain is Putative methyltransferase Rv1506c from Mycobacterium tuberculosis (strain ATCC 25618 / H37Rv).